A 369-amino-acid chain; its full sequence is MIALLIGAGVALLVALIGTPLFIRFLVAKSYGQFIRDDGPTSHHTKRGTPTMGGTVVVAAVLISYFVTHLIMWMMNPDSAGPSASGLLLLFLMVGMGFVGFLDDFIKISNKRSLGLNARAKLILQAAVGIIFAVLVLQFPNEDGLRPASTQISLVRDIPWLDLAFGGTVVGAILFVLWSNLIITAATNGVNLTDGLDGLAAGASIMVFGAYTIMGIWQNNQACGSPREAGSGCYQVRDPMDLALLAAILSAALVGFLWWNTSPAKIFMGDTGSLAIGGAVAAFAILSRTELLLAFIGGLFVLITLSVIIQVGFFKLSGGKRVFKMAPLQHHFELKGWDEVTVVVRFWILAGLFVAAGLGIFYAEWVVLL.

10 consecutive transmembrane segments (helical) span residues 2–22 (IALL…TPLF), 55–75 (TVVV…MWMM), 86–106 (GLLL…DDFI), 120–140 (AKLI…LQFP), 163–183 (LAFG…NLII), 196–216 (LDGL…IMGI), 239–259 (PMDL…FLWW), 266–286 (IFMG…FAIL), 291–311 (LLLA…IIQV), and 348–368 (ILAG…WVVL).

The protein belongs to the glycosyltransferase 4 family. MraY subfamily. It depends on Mg(2+) as a cofactor.

The protein resides in the cell membrane. The enzyme catalyses UDP-N-acetyl-alpha-D-muramoyl-L-alanyl-gamma-D-glutamyl-meso-2,6-diaminopimeloyl-D-alanyl-D-alanine + di-trans,octa-cis-undecaprenyl phosphate = di-trans,octa-cis-undecaprenyl diphospho-N-acetyl-alpha-D-muramoyl-L-alanyl-D-glutamyl-meso-2,6-diaminopimeloyl-D-alanyl-D-alanine + UMP. It participates in cell wall biogenesis; peptidoglycan biosynthesis. In terms of biological role, catalyzes the initial step of the lipid cycle reactions in the biosynthesis of the cell wall peptidoglycan: transfers peptidoglycan precursor phospho-MurNAc-pentapeptide from UDP-MurNAc-pentapeptide onto the lipid carrier undecaprenyl phosphate, yielding undecaprenyl-pyrophosphoryl-MurNAc-pentapeptide, known as lipid I. The sequence is that of Phospho-N-acetylmuramoyl-pentapeptide-transferase from Paenarthrobacter aurescens (strain TC1).